Reading from the N-terminus, the 380-residue chain is Queuine tRNA-ribosyltransferase (380 aa).

Aspartate 96 serves as the catalytic Proton acceptor. Substrate is bound by residues aspartate 96 to phenylalanine 100, aspartate 150, glutamine 193, and glycine 220. The tract at residues glycine 251–serine 257 is RNA binding. Catalysis depends on aspartate 270, which acts as the Nucleophile. An RNA binding; important for wobble base 34 recognition region spans residues threonine 275–arginine 279. Zn(2+) contacts are provided by cysteine 308, cysteine 310, cysteine 313, and histidine 339.

It belongs to the queuine tRNA-ribosyltransferase family. As to quaternary structure, homodimer. Within each dimer, one monomer is responsible for RNA recognition and catalysis, while the other monomer binds to the replacement base PreQ1. Zn(2+) is required as a cofactor.

The catalysed reaction is 7-aminomethyl-7-carbaguanine + guanosine(34) in tRNA = 7-aminomethyl-7-carbaguanosine(34) in tRNA + guanine. It participates in tRNA modification; tRNA-queuosine biosynthesis. In terms of biological role, catalyzes the base-exchange of a guanine (G) residue with the queuine precursor 7-aminomethyl-7-deazaguanine (PreQ1) at position 34 (anticodon wobble position) in tRNAs with GU(N) anticodons (tRNA-Asp, -Asn, -His and -Tyr). Catalysis occurs through a double-displacement mechanism. The nucleophile active site attacks the C1' of nucleotide 34 to detach the guanine base from the RNA, forming a covalent enzyme-RNA intermediate. The proton acceptor active site deprotonates the incoming PreQ1, allowing a nucleophilic attack on the C1' of the ribose to form the product. After dissociation, two additional enzymatic reactions on the tRNA convert PreQ1 to queuine (Q), resulting in the hypermodified nucleoside queuosine (7-(((4,5-cis-dihydroxy-2-cyclopenten-1-yl)amino)methyl)-7-deazaguanosine). This is Queuine tRNA-ribosyltransferase from Streptococcus thermophilus (strain ATCC BAA-250 / LMG 18311).